A 141-amino-acid chain; its full sequence is Hemoglobin subunit alpha-A (141 aa).

A Globin domain is found at 1 to 141 (VLSGSDKTNV…VGNVLTAKYR (141 aa)). His-58 serves as a coordination point for O2. His-87 serves as a coordination point for heme b.

Belongs to the globin family. Heterotetramer of two alpha chains and two beta chains. As to expression, red blood cells.

In terms of biological role, involved in oxygen transport from the lung to the various peripheral tissues. This chain is Hemoglobin subunit alpha-A (HBAA), found in Vultur gryphus (Andean condor).